The following is a 754-amino-acid chain: 5-methyltetrahydropteroyltriglutamate--homocysteine methyltransferase (754 aa).

5-methyltetrahydropteroyltri-L-glutamate contacts are provided by residues 17–20 and lysine 117; that span reads RELK. L-homocysteine is bound by residues 431–433 and glutamate 484; that span reads IGS. Residues 431–433 and glutamate 484 each bind L-methionine; that span reads IGS. 5-methyltetrahydropteroyltri-L-glutamate is bound by residues 515 to 516 and tryptophan 561; that span reads RC. Aspartate 599 provides a ligand contact to L-homocysteine. An L-methionine-binding site is contributed by aspartate 599. A 5-methyltetrahydropteroyltri-L-glutamate-binding site is contributed by glutamate 605. Positions 641, 643, and 665 each coordinate Zn(2+). Residue histidine 694 is the Proton donor of the active site. Position 726 (cysteine 726) interacts with Zn(2+).

It belongs to the vitamin-B12 independent methionine synthase family. It depends on Zn(2+) as a cofactor.

It carries out the reaction 5-methyltetrahydropteroyltri-L-glutamate + L-homocysteine = tetrahydropteroyltri-L-glutamate + L-methionine. It functions in the pathway amino-acid biosynthesis; L-methionine biosynthesis via de novo pathway; L-methionine from L-homocysteine (MetE route): step 1/1. Functionally, catalyzes the transfer of a methyl group from 5-methyltetrahydrofolate to homocysteine resulting in methionine formation. The chain is 5-methyltetrahydropteroyltriglutamate--homocysteine methyltransferase from Salmonella dublin (strain CT_02021853).